Reading from the N-terminus, the 431-residue chain is Enolase (431 aa).

(2R)-2-phosphoglycerate is bound at residue Gln166. Glu208 functions as the Proton donor in the catalytic mechanism. Residues Asp245, Glu288, and Asp315 each contribute to the Mg(2+) site. Lys340, Arg369, Ser370, and Lys391 together coordinate (2R)-2-phosphoglycerate. The active-site Proton acceptor is Lys340.

The protein belongs to the enolase family. Mg(2+) is required as a cofactor.

The protein localises to the cytoplasm. It localises to the secreted. It is found in the cell surface. The enzyme catalyses (2R)-2-phosphoglycerate = phosphoenolpyruvate + H2O. Its pathway is carbohydrate degradation; glycolysis; pyruvate from D-glyceraldehyde 3-phosphate: step 4/5. Its function is as follows. Catalyzes the reversible conversion of 2-phosphoglycerate (2-PG) into phosphoenolpyruvate (PEP). It is essential for the degradation of carbohydrates via glycolysis. The chain is Enolase from Clostridium perfringens (strain 13 / Type A).